Consider the following 725-residue polypeptide: Polyribonucleotide nucleotidyltransferase (725 aa).

Mg(2+) contacts are provided by aspartate 506 and aspartate 512. Positions 571-631 (PLIEQFAIDP…QNIIDACEHI (61 aa)) constitute a KH domain. The region spanning 657–724 (DEVVIGKVER…KKDRIELSSA (68 aa)) is the S1 motif domain.

The protein belongs to the polyribonucleotide nucleotidyltransferase family. The cofactor is Mg(2+).

It localises to the cytoplasm. The enzyme catalyses RNA(n+1) + phosphate = RNA(n) + a ribonucleoside 5'-diphosphate. Involved in mRNA degradation. Catalyzes the phosphorolysis of single-stranded polyribonucleotides processively in the 3'- to 5'-direction. This chain is Polyribonucleotide nucleotidyltransferase, found in Aliarcobacter butzleri (strain RM4018) (Arcobacter butzleri).